Consider the following 209-residue polypeptide: Guanylate kinase (209 aa).

The region spanning 8–186 is the Guanylate kinase-like domain; the sequence is GVLYIVSAPS…ALQDLVAITR (179 aa). ATP is bound at residue 15–22; the sequence is APSGAGKT.

It belongs to the guanylate kinase family.

The protein resides in the cytoplasm. The catalysed reaction is GMP + ATP = GDP + ADP. Its function is as follows. Essential for recycling GMP and indirectly, cGMP. The chain is Guanylate kinase from Thiobacillus denitrificans (strain ATCC 25259 / T1).